The chain runs to 84 residues: U21-theraphotoxin-Cg1a 3 (84 aa).

Residues 1 to 21 (MKVSVLITLAVLGVMFLLTSA) form the signal peptide. The propeptide occupies 22–47 (EERGSDQMDSPAWLKSMERIFQSEER). 3 cysteine pairs are disulfide-bonded: cysteine 49-cysteine 63, cysteine 56-cysteine 68, and cysteine 62-cysteine 76. Valine 82 carries the post-translational modification Valine amide.

It belongs to the neurotoxin 10 (Hwtx-1) family. 05 (F4a) subfamily. Expressed by the venom gland.

It is found in the secreted. Its function is as follows. Probable ion channel inhibitor. The polypeptide is U21-theraphotoxin-Cg1a 3 (Chilobrachys guangxiensis (Chinese earth tiger tarantula)).